Here is a 105-residue protein sequence, read N- to C-terminus: Small ribosomal subunit protein uS10c (105 aa).

The protein belongs to the universal ribosomal protein uS10 family. As to quaternary structure, part of the 30S ribosomal subunit.

It is found in the plastid. The protein localises to the chloroplast. Functionally, involved in the binding of tRNA to the ribosomes. The chain is Small ribosomal subunit protein uS10c from Pyropia yezoensis (Susabi-nori).